Reading from the N-terminus, the 102-residue chain is Cytochrome b (102 aa).

3 helical membrane-spanning segments follow: residues 1 to 21 (FGSL…FLAM), 45 to 66 (WLMR…FLHI), and 81 to 101 (WNIG…GYVL). Heme b-binding residues include His-51 and His-65.

This sequence belongs to the cytochrome b family. As to quaternary structure, the cytochrome bc1 complex contains 3 respiratory subunits (MT-CYB, CYC1 and UQCRFS1), 2 core proteins (UQCRC1 and UQCRC2) and probably 6 low-molecular weight proteins. Requires heme b as cofactor.

It localises to the mitochondrion inner membrane. In terms of biological role, component of the ubiquinol-cytochrome c reductase complex (complex III or cytochrome b-c1 complex) that is part of the mitochondrial respiratory chain. The b-c1 complex mediates electron transfer from ubiquinol to cytochrome c. Contributes to the generation of a proton gradient across the mitochondrial membrane that is then used for ATP synthesis. This is Cytochrome b (mt-cyb) from Ambystoma tigrinum (Eastern tiger salamander).